The chain runs to 432 residues: Succinate--CoA ligase [GDP-forming] subunit beta, mitochondrial (432 aa).

A mitochondrion-targeting transit peptide spans 1-37; that stretch reads MAAPVGAQARKLLRDLVLRPPLLAARSQVVQLTSRRW. Residues 46 to 274 form the ATP-grasp domain; it reads KKLMSDNGVK…NAEFRQKDIF (229 aa). Residue glutamine 57 coordinates GTP. Lysine 73 bears the N6-acetyllysine mark. Lysine 78 bears the N6-succinyllysine mark. Position 90–92 (90–92) interacts with GTP; it reads GRG. N6-acetyllysine occurs at positions 111, 132, and 139. Leucine 146 provides a ligand contact to GTP. The residue at position 161 (serine 161) is a Phosphoserine. Lysine 200, lysine 218, and lysine 227 each carry N6-acetyllysine. Asparagine 243 and aspartate 257 together coordinate Mg(2+). Lysine 271 bears the N6-acetyllysine mark. Asparagine 308 is a binding site for substrate. At lysine 338 the chain carries N6-succinyllysine. Lysine 347 carries the N6-acetyllysine modification. 365–367 is a binding site for substrate; that stretch reads GIV. An N6-acetyllysine mark is found at lysine 386 and lysine 423.

It belongs to the succinate/malate CoA ligase beta subunit family. GTP-specific subunit beta subfamily. As to quaternary structure, heterodimer of an alpha and a beta subunit. The beta subunit determines specificity for GTP. Requires Mg(2+) as cofactor.

It is found in the mitochondrion. It carries out the reaction GTP + succinate + CoA = succinyl-CoA + GDP + phosphate. It participates in carbohydrate metabolism; tricarboxylic acid cycle; succinate from succinyl-CoA (ligase route): step 1/1. Functionally, GTP-specific succinyl-CoA synthetase functions in the citric acid cycle (TCA), coupling the hydrolysis of succinyl-CoA to the synthesis of GTP and thus represents the only step of substrate-level phosphorylation in the TCA. The beta subunit provides nucleotide specificity of the enzyme and binds the substrate succinate, while the binding sites for coenzyme A and phosphate are found in the alpha subunit. The sequence is that of Succinate--CoA ligase [GDP-forming] subunit beta, mitochondrial from Bos taurus (Bovine).